The primary structure comprises 341 residues: Mytilin-2 (341 aa).

Positions 1–24 (MFKQSYQLCLVFLLFVCFYQSVKG) are cleaved as a signal peptide.

In terms of tissue distribution, component of the organic matrix of calcified shell layers like nacre and prisms.

It is found in the secreted. The polypeptide is Mytilin-2 (Mytilus californianus (California mussel)).